A 449-amino-acid polypeptide reads, in one-letter code: Xylose isomerase (449 aa).

Residues His103 and Asp106 contribute to the active site. Mg(2+) contacts are provided by Glu234, Glu270, His273, Asp298, Asp309, Asp311, and Asp342.

The protein belongs to the xylose isomerase family. As to quaternary structure, homotetramer. It depends on Mg(2+) as a cofactor.

The protein resides in the cytoplasm. It carries out the reaction alpha-D-xylose = alpha-D-xylulofuranose. The sequence is that of Xylose isomerase from Levilactobacillus brevis (Lactobacillus brevis).